The following is a 926-amino-acid chain: Protein Niban 1 (926 aa).

A lipid anchor (N-myristoyl glycine) is attached at glycine 2. Phosphoserine occurs at positions 578, 581, 595, 601, and 640. Disordered stretches follow at residues 604-699 (LPGA…VPGS) and 719-889 (VEND…EQVN). Over residues 661–672 (VENTAGPLSSHL) the composition is skewed to polar residues. The residue at position 699 (serine 699) is a Phosphoserine. Positions 733-745 (NIKEEESKIHPEA) are enriched in basic and acidic residues. Serine 755 bears the Phosphoserine mark. Positions 756 to 767 (CEEREVREKEAQ) are enriched in basic and acidic residues. Low complexity predominate over residues 784 to 797 (GRGSTSQSTSGGLT). Residues 840-854 (VTVTPQEDATLSSNP) are compositionally biased toward polar residues. Serine 923 bears the Phosphoserine mark.

The protein belongs to the Niban family.

The protein resides in the cytoplasm. It is found in the membrane. In terms of biological role, regulates phosphorylation of a number of proteins involved in translation regulation including EIF2A, EIF4EBP1 and RPS6KB1. May be involved in the endoplasmic reticulum stress response. The protein is Protein Niban 1 of Mus musculus (Mouse).